A 503-amino-acid chain; its full sequence is Poxin-Schlafen (503 aa).

The Proton donor role is filled by H15. Catalysis depends on Y136, which acts as the Shared with catalytic histidine of dimeric partner. Catalysis depends on K140, which acts as the Proton acceptor; shared with catalytic histidine of dimeric partner.

It in the N-terminal section; belongs to the poxin family. This sequence in the C-terminal section; belongs to the Schlafen protein family. Subgroup poxviridae B3 subfamily. Homodimer.

It carries out the reaction 2',3'-cGAMP + H2O = Gp(2'-5')Ap(3') + H(+). Its function is as follows. Nuclease that is responsible for viral evasion of host cGAS-STING innate immunity. Cleaves 2',3'-cGAMP which is produced by host cGAS following recognition of cytosolic DNA and blocks the subsequent 2',3'-cGAMP-mediated activation of TMEM173/STING, which normally spreads to adjacent cells and activates the interferon and NF-kappa-B immune responses. The chain is Poxin-Schlafen (OPG188) from Cynomys gunnisoni (Gunnison's prairie dog).